A 172-amino-acid chain; its full sequence is Ribosome maturation factor RimM (172 aa).

Positions 96–168 (DGEFYYHEII…RVQVELMEGL (73 aa)) constitute a PRC barrel domain.

It belongs to the RimM family. In terms of assembly, binds ribosomal protein uS19.

The protein localises to the cytoplasm. Its function is as follows. An accessory protein needed during the final step in the assembly of 30S ribosomal subunit, possibly for assembly of the head region. Essential for efficient processing of 16S rRNA. May be needed both before and after RbfA during the maturation of 16S rRNA. It has affinity for free ribosomal 30S subunits but not for 70S ribosomes. This is Ribosome maturation factor RimM from Streptococcus agalactiae serotype Ia (strain ATCC 27591 / A909 / CDC SS700).